A 158-amino-acid chain; its full sequence is Transcription elongation factor GreA (158 aa).

The protein belongs to the GreA/GreB family.

Necessary for efficient RNA polymerase transcription elongation past template-encoded arresting sites. The arresting sites in DNA have the property of trapping a certain fraction of elongating RNA polymerases that pass through, resulting in locked ternary complexes. Cleavage of the nascent transcript by cleavage factors such as GreA or GreB allows the resumption of elongation from the new 3'terminus. GreA releases sequences of 2 to 3 nucleotides. This is Transcription elongation factor GreA from Yersinia pestis.